We begin with the raw amino-acid sequence, 149 residues long: Arginine repressor (149 aa).

The protein belongs to the ArgR family.

The protein localises to the cytoplasm. It functions in the pathway amino-acid biosynthesis; L-arginine biosynthesis [regulation]. Its function is as follows. Regulates arginine biosynthesis genes. The chain is Arginine repressor from Chlorobaculum tepidum (strain ATCC 49652 / DSM 12025 / NBRC 103806 / TLS) (Chlorobium tepidum).